Consider the following 854-residue polypeptide: Protein translocase subunit SecA (854 aa).

ATP contacts are provided by residues Q81, 99–103 (GEGKT), and D487.

This sequence belongs to the SecA family. As to quaternary structure, monomer and homodimer. Part of the essential Sec protein translocation apparatus which comprises SecA, SecYEG and auxiliary proteins SecDF. Other proteins may also be involved.

The protein localises to the cell membrane. Its subcellular location is the cytoplasm. It carries out the reaction ATP + H2O + cellular proteinSide 1 = ADP + phosphate + cellular proteinSide 2.. In terms of biological role, part of the Sec protein translocase complex. Interacts with the SecYEG preprotein conducting channel. Has a central role in coupling the hydrolysis of ATP to the transfer of proteins into and across the cell membrane, serving as an ATP-driven molecular motor driving the stepwise translocation of polypeptide chains across the membrane. This is Protein translocase subunit SecA from Mycoplasma mobile (strain ATCC 43663 / 163K / NCTC 11711) (Mesomycoplasma mobile).